The sequence spans 474 residues: Cytochrome c biogenesis protein CcsB (474 aa).

The next 3 membrane-spanning stretches (helical) occupy residues 36 to 56 (LKLA…GTVI), 96 to 116 (SWWF…CTFR), and 182 to 202 (VGPI…MIGA).

It belongs to the Ccs1/CcsB family. May interact with CcsA.

It localises to the cell inner membrane. Its function is as follows. Required during biogenesis of c-type cytochromes (cytochrome c6 and cytochrome f) at the step of heme attachment. This chain is Cytochrome c biogenesis protein CcsB, found in Gloeobacter violaceus (strain ATCC 29082 / PCC 7421).